Reading from the N-terminus, the 505-residue chain is ATP synthase subunit alpha (505 aa).

Glycine 169–threonine 176 is a binding site for ATP.

It belongs to the ATPase alpha/beta chains family. As to quaternary structure, F-type ATPases have 2 components, CF(1) - the catalytic core - and CF(0) - the membrane proton channel. CF(1) has five subunits: alpha(3), beta(3), gamma(1), delta(1), epsilon(1). CF(0) has three main subunits: a(1), b(2) and c(9-12). The alpha and beta chains form an alternating ring which encloses part of the gamma chain. CF(1) is attached to CF(0) by a central stalk formed by the gamma and epsilon chains, while a peripheral stalk is formed by the delta and b chains.

The protein resides in the cell inner membrane. The enzyme catalyses ATP + H2O + 4 H(+)(in) = ADP + phosphate + 5 H(+)(out). Functionally, produces ATP from ADP in the presence of a proton gradient across the membrane. The alpha chain is a regulatory subunit. This chain is ATP synthase subunit alpha, found in Desulfatibacillum aliphaticivorans.